The sequence spans 333 residues: Uroporphyrinogen decarboxylase (333 aa).

Substrate-binding positions include 21 to 25, D70, Y139, S194, and H309; that span reads RQVGR.

Belongs to the uroporphyrinogen decarboxylase family. In terms of assembly, homodimer.

Its subcellular location is the cytoplasm. It catalyses the reaction uroporphyrinogen III + 4 H(+) = coproporphyrinogen III + 4 CO2. It functions in the pathway porphyrin-containing compound metabolism; protoporphyrin-IX biosynthesis; coproporphyrinogen-III from 5-aminolevulinate: step 4/4. Catalyzes the decarboxylation of four acetate groups of uroporphyrinogen-III to yield coproporphyrinogen-III. This is Uroporphyrinogen decarboxylase from Chlamydia abortus (strain DSM 27085 / S26/3) (Chlamydophila abortus).